The following is a 348-amino-acid chain: NADH-cytochrome b5 reductase 2 (348 aa).

The helical transmembrane segment at 41–61 (TLLYGAAAAAVAGAGYYFLGG) threads the bilayer. In terms of domain architecture, FAD-binding FR-type spans 97 to 202 (QGWVSLKLEE…KGPLPKYPWT (106 aa)). 205-240 (KHGHIALVAGGTGITPMFQLCRAIFNNPDDQTKVTL) contacts FAD.

The protein belongs to the flavoprotein pyridine nucleotide cytochrome reductase family. It depends on FAD as a cofactor.

Its subcellular location is the mitochondrion outer membrane. The enzyme catalyses 2 Fe(III)-[cytochrome b5] + NADH = 2 Fe(II)-[cytochrome b5] + NAD(+) + H(+). In terms of biological role, may mediate the reduction of outer membrane cytochrome b5. This is NADH-cytochrome b5 reductase 2 (MCR1) from Chaetomium globosum (strain ATCC 6205 / CBS 148.51 / DSM 1962 / NBRC 6347 / NRRL 1970) (Soil fungus).